Reading from the N-terminus, the 171-residue chain is Co-chaperone protein HscB (171 aa).

Positions 2 to 74 (DYFTLFGLPA…LTRAEYLLSL (73 aa)) constitute a J domain.

It belongs to the HscB family. Interacts with HscA and stimulates its ATPase activity. Interacts with IscU.

Its function is as follows. Co-chaperone involved in the maturation of iron-sulfur cluster-containing proteins. Seems to help targeting proteins to be folded toward HscA. In Salmonella choleraesuis (strain SC-B67), this protein is Co-chaperone protein HscB.